A 653-amino-acid chain; its full sequence is MGKIIGIDLGTTNSCVALMEGNQVKVIENSEGARTTPSIIAYMDDNEVLVGAPAKRQSVTNPKNTLYAVKRLIGRRFEEKEVQKDIGLMPYKIVKHDNGDAWVEAHGNKLAPSQVSAEVLRKMKKTAEDYLGEPVTEAVITVPAYFNDSQRQATKDAGRIAGLEVKRIINEPTAAALAFGLDKAEKGDRKIAVFDLGGGTFDISIIEIADVDGEKQFEVLSTNGDTFLGGEDFDQRIIDYIIGEFKKEQGVDLSKDVLALQRLKEAAEKAKIELSSGQQTEINLPYITADASGPKHLNLKITRAKLEALVEDLIERTIEPCRVAIKDAGVKVGEIDDVILVGGQTRMPKVQEKVKEFFGKDPRRDVNPDEAVAVGAAIQGQVLSGDRKDVLLLDVTPLSLGIETLGGVMTKMINKNTTIPTKHAQVYSTADDNQGAVTIKVFQGEREMAAGNKLLGEFNLEGIPPAPRGVPQIEVSFDIDANGILHVGAKDKATGKENRITIKANSGLSEAEIEKMVKDAEANAEEDHKLRELADARNQGDALVHSTKKALTEYGDKLEAGEKEKIEAALKDLEETLKNGSSDKAAIEAKIETVATASQKLGEKMYADMQAQGAAGAAGAAGGAGAAAGAEAAGASQQADDVVDAEFKEVKKD.

Position 200 is a phosphothreonine; by autocatalysis (threonine 200). The interval 612–653 (QGAAGAAGAAGGAGAAAGAEAAGASQQADDVVDAEFKEVKKD) is disordered. The span at 627–639 (AAGAEAAGASQQA) shows a compositional bias: low complexity.

This sequence belongs to the heat shock protein 70 family.

Its function is as follows. Acts as a chaperone. The sequence is that of Chaperone protein DnaK from Paraburkholderia phymatum (strain DSM 17167 / CIP 108236 / LMG 21445 / STM815) (Burkholderia phymatum).